Here is a 702-residue protein sequence, read N- to C-terminus: Cytolytic toxin-beta (702 aa).

The segment at 2–264 (PSDILVVAAL…EAPQLMADSS (263 aa)) is structural MACPF/CDC pore-forming domain. N-linked (GlcNAc...) asparagine glycosylation is found at asparagine 94, asparagine 101, and asparagine 286. Positions 265–387 (TPILRKVRNT…DIIEEAKHKV (123 aa)) are structural FAT domain. The interval 388–515 (VLSKSQMARE…PRIPPVETIQ (128 aa)) is thioredoxin (THX) domain. A B30.2/SPRY domain is found at 504 to 702 (SNPRIPPVET…ANGQIKLKGE (199 aa)).

Belongs to the SNTX/VTX toxin family. As to quaternary structure, heterodimer of alpha and beta subunits; non-covalently linked. Also associates into tetramers or even higher aggregates. In terms of processing, intrachain disulfide bonds may be present in the heterodimer. As to expression, expressed by the venom gland.

It localises to the secreted. Functionally, this heterodimer induces potent hemolytic activities (when tested on rabbit erythrocytes, EC(50)=25-56 ng/mL) due to its ability to form pores in the cell membrane. The pore may be composed of 10 alpha/beta heterodimers. The toxin shows cardiovascular effects that include a vasorelaxant action that may involve the L-arginine-nitric oxid synthase pathway. In addition, it displays edema-inducing activities, increases vascular permeability. It also shows myotoxic activities and interferes irreversibly with neuromuscular function. It also induces irreversible platelet aggregation in rabbit or rat (but not in human or mouse) whole blood. In addition, it has been observed to increase spontaneous quantal acetylcholine release from isolated frog cutaneous pectoris motor endings. The protein is Cytolytic toxin-beta of Scorpaena plumieri (Spotted scorpionfish).